The primary structure comprises 193 residues: ATP synthase subunit b (193 aa).

A helical transmembrane segment spans residues 35 to 55; that stretch reads IPMMLATFIAFVIVFLLLFFF.

It belongs to the ATPase B chain family. In terms of assembly, F-type ATPases have 2 components, F(1) - the catalytic core - and F(0) - the membrane proton channel. F(1) has five subunits: alpha(3), beta(3), gamma(1), delta(1), epsilon(1). F(0) has three main subunits: a(1), b(2) and c(10-14). The alpha and beta chains form an alternating ring which encloses part of the gamma chain. F(1) is attached to F(0) by a central stalk formed by the gamma and epsilon chains, while a peripheral stalk is formed by the delta and b chains.

It is found in the cell membrane. F(1)F(0) ATP synthase produces ATP from ADP in the presence of a proton or sodium gradient. F-type ATPases consist of two structural domains, F(1) containing the extramembraneous catalytic core and F(0) containing the membrane proton channel, linked together by a central stalk and a peripheral stalk. During catalysis, ATP synthesis in the catalytic domain of F(1) is coupled via a rotary mechanism of the central stalk subunits to proton translocation. Its function is as follows. Component of the F(0) channel, it forms part of the peripheral stalk, linking F(1) to F(0). In Mycoplasmopsis synoviae (strain 53) (Mycoplasma synoviae), this protein is ATP synthase subunit b.